The sequence spans 440 residues: Probable carboxypeptidase AFUB_072730 (440 aa).

An N-terminal signal peptide occupies residues 1-16; it reads MKPLTSLLLSAALSAA. N-linked (GlcNAc...) asparagine glycans are attached at residues Asn-87 and Asn-149. Asp-165 contacts Zn(2+). Residue Glu-197 is the Proton acceptor of the active site. Glu-198 lines the Zn(2+) pocket. N-linked (GlcNAc...) asparagine glycosylation is found at Asn-353 and Asn-372.

The protein belongs to the peptidase M20A family. The cofactor is Zn(2+).

It is found in the secreted. The protein is Probable carboxypeptidase AFUB_072730 of Aspergillus fumigatus (strain CBS 144.89 / FGSC A1163 / CEA10) (Neosartorya fumigata).